The sequence spans 166 residues: Large ribosomal subunit protein uL10 (166 aa).

This sequence belongs to the universal ribosomal protein uL10 family. In terms of assembly, part of the ribosomal stalk of the 50S ribosomal subunit. The N-terminus interacts with L11 and the large rRNA to form the base of the stalk. The C-terminus forms an elongated spine to which L12 dimers bind in a sequential fashion forming a multimeric L10(L12)X complex.

Forms part of the ribosomal stalk, playing a central role in the interaction of the ribosome with GTP-bound translation factors. The polypeptide is Large ribosomal subunit protein uL10 (Azotobacter vinelandii (strain DJ / ATCC BAA-1303)).